We begin with the raw amino-acid sequence, 86 residues long: Small ribosomal subunit protein uS17 (86 aa).

The protein belongs to the universal ribosomal protein uS17 family. Part of the 30S ribosomal subunit.

In terms of biological role, one of the primary rRNA binding proteins, it binds specifically to the 5'-end of 16S ribosomal RNA. This Streptococcus thermophilus (strain CNRZ 1066) protein is Small ribosomal subunit protein uS17.